The chain runs to 99 residues: uncharacterized protein (99 aa).

Residues 32–79 enclose the TM2 domain; the sequence is KKSVGIAVLLSFIIPGAGQMYLGRVGKGIILLLTCWLIIPWIYSIYDA. The next 2 helical transmembrane spans lie at 34–54 and 56–76; these read SVGI…MYLG and VGKG…IYSI.

The protein resides in the cell membrane. This is an uncharacterized protein from Methanocaldococcus jannaschii (strain ATCC 43067 / DSM 2661 / JAL-1 / JCM 10045 / NBRC 100440) (Methanococcus jannaschii).